We begin with the raw amino-acid sequence, 204 residues long: 3-isopropylmalate dehydratase small subunit (204 aa).

This sequence belongs to the LeuD family. LeuD type 1 subfamily. Heterodimer of LeuC and LeuD.

It catalyses the reaction (2R,3S)-3-isopropylmalate = (2S)-2-isopropylmalate. It functions in the pathway amino-acid biosynthesis; L-leucine biosynthesis; L-leucine from 3-methyl-2-oxobutanoate: step 2/4. Its function is as follows. Catalyzes the isomerization between 2-isopropylmalate and 3-isopropylmalate, via the formation of 2-isopropylmaleate. The sequence is that of 3-isopropylmalate dehydratase small subunit from Roseiflexus sp. (strain RS-1).